A 117-amino-acid polypeptide reads, in one-letter code: 5-hydroxyisourate hydrolase (117 aa).

Substrate contacts are provided by histidine 7, arginine 45, and tyrosine 114.

This sequence belongs to the transthyretin family. 5-hydroxyisourate hydrolase subfamily. Homotetramer.

It carries out the reaction 5-hydroxyisourate + H2O = 5-hydroxy-2-oxo-4-ureido-2,5-dihydro-1H-imidazole-5-carboxylate + H(+). Its function is as follows. Catalyzes the hydrolysis of 5-hydroxyisourate (HIU) to 2-oxo-4-hydroxy-4-carboxy-5-ureidoimidazoline (OHCU). The sequence is that of 5-hydroxyisourate hydrolase from Ralstonia nicotianae (strain ATCC BAA-1114 / GMI1000) (Ralstonia solanacearum).